The primary structure comprises 540 residues: 2-succinyl-5-enolpyruvyl-6-hydroxy-3-cyclohexene-1-carboxylate synthase (540 aa).

The protein belongs to the TPP enzyme family. MenD subfamily. As to quaternary structure, homodimer. Mg(2+) serves as cofactor. It depends on Mn(2+) as a cofactor. Requires thiamine diphosphate as cofactor.

It catalyses the reaction isochorismate + 2-oxoglutarate + H(+) = 5-enolpyruvoyl-6-hydroxy-2-succinyl-cyclohex-3-ene-1-carboxylate + CO2. It participates in quinol/quinone metabolism; 1,4-dihydroxy-2-naphthoate biosynthesis; 1,4-dihydroxy-2-naphthoate from chorismate: step 2/7. It functions in the pathway quinol/quinone metabolism; menaquinone biosynthesis. In terms of biological role, catalyzes the thiamine diphosphate-dependent decarboxylation of 2-oxoglutarate and the subsequent addition of the resulting succinic semialdehyde-thiamine pyrophosphate anion to isochorismate to yield 2-succinyl-5-enolpyruvyl-6-hydroxy-3-cyclohexene-1-carboxylate (SEPHCHC). This is 2-succinyl-5-enolpyruvyl-6-hydroxy-3-cyclohexene-1-carboxylate synthase from Mycobacteroides abscessus (strain ATCC 19977 / DSM 44196 / CCUG 20993 / CIP 104536 / JCM 13569 / NCTC 13031 / TMC 1543 / L948) (Mycobacterium abscessus).